The following is a 156-amino-acid chain: Small ribosomal subunit protein uS7 (156 aa).

The protein belongs to the universal ribosomal protein uS7 family. Part of the 30S ribosomal subunit. Contacts proteins S9 and S11.

One of the primary rRNA binding proteins, it binds directly to 16S rRNA where it nucleates assembly of the head domain of the 30S subunit. Is located at the subunit interface close to the decoding center, probably blocks exit of the E-site tRNA. This Streptococcus mutans serotype c (strain ATCC 700610 / UA159) protein is Small ribosomal subunit protein uS7.